The primary structure comprises 179 residues: Large ribosomal subunit protein uL5 (179 aa).

The protein belongs to the universal ribosomal protein uL5 family. In terms of assembly, part of the 50S ribosomal subunit; part of the 5S rRNA/L5/L18/L25 subcomplex. Contacts the 5S rRNA and the P site tRNA. Forms a bridge to the 30S subunit in the 70S ribosome.

Its function is as follows. This is one of the proteins that bind and probably mediate the attachment of the 5S RNA into the large ribosomal subunit, where it forms part of the central protuberance. In the 70S ribosome it contacts protein S13 of the 30S subunit (bridge B1b), connecting the 2 subunits; this bridge is implicated in subunit movement. Contacts the P site tRNA; the 5S rRNA and some of its associated proteins might help stabilize positioning of ribosome-bound tRNAs. In Halorhodospira halophila (strain DSM 244 / SL1) (Ectothiorhodospira halophila (strain DSM 244 / SL1)), this protein is Large ribosomal subunit protein uL5.